The following is a 377-amino-acid chain: Ribosomal RNA large subunit methyltransferase G (377 aa).

This sequence belongs to the methyltransferase superfamily. RlmG family.

It localises to the cytoplasm. The catalysed reaction is guanosine(1835) in 23S rRNA + S-adenosyl-L-methionine = N(2)-methylguanosine(1835) in 23S rRNA + S-adenosyl-L-homocysteine + H(+). In terms of biological role, specifically methylates the guanine in position 1835 (m2G1835) of 23S rRNA. In Streptomyces coelicolor (strain ATCC BAA-471 / A3(2) / M145), this protein is Ribosomal RNA large subunit methyltransferase G.